A 1064-amino-acid polypeptide reads, in one-letter code: Carbamoyl phosphate synthase large chain (1064 aa).

A carboxyphosphate synthetic domain region spans residues 1–401 (MPKRADIKKI…ALMKAIRSLE (401 aa)). ATP contacts are provided by R129, R169, G175, G176, K208, I210, E215, G241, I242, H243, Q284, and E298. An ATP-grasp 1 domain is found at 133-327 (KQLMEALKEP…IAKMAAKIAI (195 aa)). 3 residues coordinate Mg(2+): Q284, E298, and N300. Mn(2+) contacts are provided by Q284, E298, and N300. Residues 402–546 (IGTFALDDLT…YSTYELENES (145 aa)) form an oligomerization domain region. A carbamoyl phosphate synthetic domain region spans residues 547–929 (LKEKRPSVLV…ALYKAFVAAG (383 aa)). The 191-residue stretch at 671-861 (NQVIKKLDLS…LAQLATRVML (191 aa)) folds into the ATP-grasp 2 domain. Residues R707, S746, L748, E752, G777, V778, H779, S780, Q820, and E832 each contribute to the ATP site. Mg(2+) is bound by residues Q820, E832, and N834. Mn(2+) contacts are provided by Q820, E832, and N834. An MGS-like domain is found at 930-1064 (FKVHEHGNVL…VSAINKGDKS (135 aa)). The segment at 930–1064 (FKVHEHGNVL…VSAINKGDKS (135 aa)) is allosteric domain.

This sequence belongs to the CarB family. In terms of assembly, composed of two chains; the small (or glutamine) chain promotes the hydrolysis of glutamine to ammonia, which is used by the large (or ammonia) chain to synthesize carbamoyl phosphate. Tetramer of heterodimers (alpha,beta)4. Requires Mg(2+) as cofactor. It depends on Mn(2+) as a cofactor.

It catalyses the reaction hydrogencarbonate + L-glutamine + 2 ATP + H2O = carbamoyl phosphate + L-glutamate + 2 ADP + phosphate + 2 H(+). The catalysed reaction is hydrogencarbonate + NH4(+) + 2 ATP = carbamoyl phosphate + 2 ADP + phosphate + 2 H(+). It functions in the pathway amino-acid biosynthesis; L-arginine biosynthesis; carbamoyl phosphate from bicarbonate: step 1/1. It participates in pyrimidine metabolism; UMP biosynthesis via de novo pathway; (S)-dihydroorotate from bicarbonate: step 1/3. Functionally, large subunit of the glutamine-dependent carbamoyl phosphate synthetase (CPSase). CPSase catalyzes the formation of carbamoyl phosphate from the ammonia moiety of glutamine, carbonate, and phosphate donated by ATP, constituting the first step of 2 biosynthetic pathways, one leading to arginine and/or urea and the other to pyrimidine nucleotides. The large subunit (synthetase) binds the substrates ammonia (free or transferred from glutamine from the small subunit), hydrogencarbonate and ATP and carries out an ATP-coupled ligase reaction, activating hydrogencarbonate by forming carboxy phosphate which reacts with ammonia to form carbamoyl phosphate. The protein is Carbamoyl phosphate synthase large chain of Oenococcus oeni (strain ATCC BAA-331 / PSU-1).